A 282-amino-acid chain; its full sequence is Release factor glutamine methyltransferase (282 aa).

S-adenosyl-L-methionine contacts are provided by Asp-141, Phe-169, and Asn-186. Residue 186–189 (NPPY) coordinates substrate.

The protein belongs to the protein N5-glutamine methyltransferase family. PrmC subfamily.

It carries out the reaction L-glutaminyl-[peptide chain release factor] + S-adenosyl-L-methionine = N(5)-methyl-L-glutaminyl-[peptide chain release factor] + S-adenosyl-L-homocysteine + H(+). Methylates the class 1 translation termination release factors RF1/PrfA and RF2/PrfB on the glutamine residue of the universally conserved GGQ motif. This chain is Release factor glutamine methyltransferase, found in Mycoplasma mycoides subsp. mycoides SC (strain CCUG 32753 / NCTC 10114 / PG1).